The sequence spans 509 residues: Ankyrin repeat domain-containing protein 13C (509 aa).

A compositionally biased stretch (basic and acidic residues) spans 1–19; that stretch reads MTGEKIRSLHRDQKPSKDE. Residues 1–42 form a disordered region; that stretch reads MTGEKIRSLHRDQKPSKDEDLLEPDEEATAGGTFTRTGKLKN. 3 ANK repeats span residues 79 to 110, 111 to 140, and 144 to 173; these read DAYFPVHECVFKGDIRRLSSLIRSHSIGQKDN, HGNTPLHLAVMLGNKECAHLLLAHNAPVKV, and QGWSPLAEAISYGDRQMITALLRKLKQQSR.

The protein resides in the endoplasmic reticulum membrane. Functionally, acts as a molecular chaperone for G protein-coupled receptors, regulating their biogenesis and exit from the ER. The polypeptide is Ankyrin repeat domain-containing protein 13C (ankrd13c) (Xenopus tropicalis (Western clawed frog)).